Here is a 941-residue protein sequence, read N- to C-terminus: Peroxisomal ATPase PEX6 (941 aa).

ATP is bound by residues 384 to 391 (GIPGCGKR) and 698 to 705 (GPPGTGKT).

It belongs to the AAA ATPase family. In terms of assembly, interacts with PEX1; forming the PEX1-PEX6 AAA ATPase complex, which is composed of a heterohexamer formed by a trimer of PEX1-PEX6 dimers. Interacts with APME9.

Its subcellular location is the cytoplasm. It localises to the cytosol. The protein resides in the peroxisome membrane. It catalyses the reaction ATP + H2O = ADP + phosphate + H(+). In terms of biological role, component of the PEX1-PEX6 AAA ATPase complex, a protein dislocase complex that mediates the ATP-dependent extraction of the PEX5 receptor from peroxisomal membranes, an essential step for PEX5 recycling. Specifically recognizes PEX5 monoubiquitinated at 'Cys-11', and pulls it out of the peroxisome lumen through the PEX2-PEX10-PEX12 retrotranslocation channel. Extraction by the PEX1-PEX6 AAA ATPase complex is accompanied by unfolding of the TPR repeats and release of bound cargo from PEX5. Required for jasmonate biosynthesis. Necessary for the developmental elimination of obsolete peroxisome matix proteins. This Arabidopsis thaliana (Mouse-ear cress) protein is Peroxisomal ATPase PEX6.